Consider the following 206-residue polypeptide: Triosephosphate isomerase (206 aa).

The active-site Electrophile is H76. The Proton acceptor role is filled by E146.

This sequence belongs to the triosephosphate isomerase family. Homodimer.

The enzyme catalyses D-glyceraldehyde 3-phosphate = dihydroxyacetone phosphate. The protein operates within carbohydrate biosynthesis; gluconeogenesis. Its pathway is carbohydrate degradation; glycolysis; D-glyceraldehyde 3-phosphate from glycerone phosphate: step 1/1. The chain is Triosephosphate isomerase (Tpi) from Aedes togoi (Mosquito).